The following is a 435-amino-acid chain: Nicotinate phosphoribosyltransferase (435 aa).

Phosphohistidine; by autocatalysis is present on His-230.

Belongs to the NAPRTase family. Transiently phosphorylated on a His residue during the reaction cycle. Phosphorylation strongly increases the affinity for substrates and increases the rate of nicotinate D-ribonucleotide production. Dephosphorylation regenerates the low-affinity form of the enzyme, leading to product release.

The catalysed reaction is nicotinate + 5-phospho-alpha-D-ribose 1-diphosphate + ATP + H2O = nicotinate beta-D-ribonucleotide + ADP + phosphate + diphosphate. The protein operates within cofactor biosynthesis; NAD(+) biosynthesis; nicotinate D-ribonucleotide from nicotinate: step 1/1. Catalyzes the synthesis of beta-nicotinate D-ribonucleotide from nicotinate and 5-phospho-D-ribose 1-phosphate at the expense of ATP. The polypeptide is Nicotinate phosphoribosyltransferase (Vibrio cholerae serotype O1 (strain ATCC 39541 / Classical Ogawa 395 / O395)).